The sequence spans 382 residues: O-antigen polymerase (382 aa).

Residues 1 to 3 (MNN) lie on the Cytoplasmic side of the membrane. Residues 4 to 22 (INKIFITFLCIELIIGGGG) form a helical membrane-spanning segment. The Periplasmic segment spans residues 23–34 (RLLEPLGIFPLR). The chain crosses the membrane as a helical span at residues 35 to 54 (YLLFVFSFILLIFNLVTFNF). The Cytoplasmic segment spans residues 55–62 (SITQKCVS). The helical transmembrane segment at 63 to 81 (LFIWLLLFPFYGFFVGLLA) threads the bilayer. Residues 82–94 (GNKINDILFDVQP) lie on the Periplasmic side of the membrane. The chain crosses the membrane as a helical span at residues 95-112 (YLFMLSLIYLFTLRYTLK). Topologically, residues 113 to 125 (VFSCEIFIKIVNA) are cytoplasmic. A helical transmembrane segment spans residues 126-146 (FALYGSLLYISYIILLNFGLL). Residues 147–167 (NFNLIYEHLSLTSEFFFRPDG) are Periplasmic-facing. Residues 168 to 187 (AFFSKSFYFFGVGAIISFVD) traverse the membrane as a helical segment. At 188–189 (KK) the chain is on the cytoplasmic side. Residues 190–206 (YLKCLIIVLAILLTESR) traverse the membrane as a helical segment. Residues 207 to 208 (GV) lie on the Periplasmic side of the membrane. The chain crosses the membrane as a helical span at residues 209-226 (LLFTTLSLLLASFKLHKL). The Cytoplasmic segment spans residues 227–229 (YLN). The helical transmembrane segment at 230 to 247 (TIIIILGSVLFIIMLYMV) threads the bilayer. The Periplasmic portion of the chain corresponds to 248-300 (GSRSEDSDSVRFNDLYFYYKNVDLATFLFGRGFGSFILDRLRIEIVPLEILQK). A helical transmembrane segment spans residues 301–318 (TGVIGVFISLVPMLLIFL). Topologically, residues 319–329 (KGYFLNSTKTS) are cytoplasmic. Residues 330-349 (LMMSLILFFSITVSITNPFL) form a helical membrane-spanning segment. Topologically, residues 350 to 352 (FTP) are periplasmic. A helical transmembrane segment spans residues 353–370 (MGIFIIGVVVLWVFSIEN). The Cytoplasmic portion of the chain corresponds to 371 to 382 (IQISNNLTSGAK).

It is found in the cell inner membrane. The catalysed reaction is n lipid-linked O-antigen repeat units = a lipid-linked O antigen + (n-1) polyisoprenyl diphosphate.. The protein operates within bacterial outer membrane biogenesis; LPS O-antigen biosynthesis. In terms of biological role, polymerase involved in the biosynthesis of the lipopolysaccharide (LPS). Catalyzes the polymerization of the O-antigen repeat units on the periplasmic face of the inner membrane, leading to the formation of the lipid-linked O-antigen molecule. The sequence is that of O-antigen polymerase from Shigella flexneri.